The sequence spans 396 residues: 1-deoxy-D-xylulose 5-phosphate reductoisomerase (396 aa).

NADPH-binding residues include threonine 10, glycine 11, serine 12, isoleucine 13, and asparagine 123. Lysine 124 serves as a coordination point for 1-deoxy-D-xylulose 5-phosphate. Glutamate 125 provides a ligand contact to NADPH. Residue aspartate 149 participates in Mn(2+) binding. 1-deoxy-D-xylulose 5-phosphate is bound by residues serine 150, glutamate 151, serine 185, and histidine 208. Glutamate 151 contributes to the Mn(2+) binding site. Position 214 (glycine 214) interacts with NADPH. Residues serine 221, asparagine 226, lysine 227, and glutamate 230 each contribute to the 1-deoxy-D-xylulose 5-phosphate site. A Mn(2+)-binding site is contributed by glutamate 230.

This sequence belongs to the DXR family. Mg(2+) serves as cofactor. It depends on Mn(2+) as a cofactor.

It catalyses the reaction 2-C-methyl-D-erythritol 4-phosphate + NADP(+) = 1-deoxy-D-xylulose 5-phosphate + NADPH + H(+). It functions in the pathway isoprenoid biosynthesis; isopentenyl diphosphate biosynthesis via DXP pathway; isopentenyl diphosphate from 1-deoxy-D-xylulose 5-phosphate: step 1/6. Functionally, catalyzes the NADPH-dependent rearrangement and reduction of 1-deoxy-D-xylulose-5-phosphate (DXP) to 2-C-methyl-D-erythritol 4-phosphate (MEP). The sequence is that of 1-deoxy-D-xylulose 5-phosphate reductoisomerase from Shewanella baltica (strain OS155 / ATCC BAA-1091).